Here is a 286-residue protein sequence, read N- to C-terminus: Bifunctional protein FolD (286 aa).

Residues 165–167 (GRS), Ser190, and Val231 contribute to the NADP(+) site.

Belongs to the tetrahydrofolate dehydrogenase/cyclohydrolase family. In terms of assembly, homodimer.

The catalysed reaction is (6R)-5,10-methylene-5,6,7,8-tetrahydrofolate + NADP(+) = (6R)-5,10-methenyltetrahydrofolate + NADPH. The enzyme catalyses (6R)-5,10-methenyltetrahydrofolate + H2O = (6R)-10-formyltetrahydrofolate + H(+). Its pathway is one-carbon metabolism; tetrahydrofolate interconversion. Its function is as follows. Catalyzes the oxidation of 5,10-methylenetetrahydrofolate to 5,10-methenyltetrahydrofolate and then the hydrolysis of 5,10-methenyltetrahydrofolate to 10-formyltetrahydrofolate. This is Bifunctional protein FolD from Bacillus cereus (strain ATCC 10987 / NRS 248).